The sequence spans 353 residues: Photosystem II protein D1 (353 aa).

An N-acetylthreonine modification is found at Thr-2. Thr-2 bears the Phosphothreonine mark. 3 consecutive transmembrane segments (helical) span residues 29–46, 118–133, and 142–156; these read YIGW…TATS, HFLL…EWEL, and WIVV…AATA. His-118 contributes to the chlorophyll a binding site. Tyr-126 serves as a coordination point for pheophytin a. Residues Asp-170 and Glu-189 each coordinate [CaMn4O5] cluster. A helical transmembrane segment spans residues 197–218; the sequence is FHMLGVAGVFGGSLFSAMHGSL. His-198 is a binding site for chlorophyll a. Residues His-215 and 264–265 contribute to the a quinone site; that span reads SF. Residue His-215 participates in Fe cation binding. His-272 is a Fe cation binding site. Residues 274–288 traverse the membrane as a helical segment; sequence FLAAWPVVGIWFTAL. The [CaMn4O5] cluster site is built by His-332, Glu-333, Asp-342, and Ala-344. Positions 345–353 are excised as a propeptide; sequence AVDAPSISG.

It belongs to the reaction center PufL/M/PsbA/D family. In terms of assembly, PSII is composed of 1 copy each of membrane proteins PsbA, PsbB, PsbC, PsbD, PsbE, PsbF, PsbH, PsbI, PsbJ, PsbK, PsbL, PsbM, PsbT, PsbX, PsbY, PsbZ, Psb30/Ycf12, at least 3 peripheral proteins of the oxygen-evolving complex and a large number of cofactors. It forms dimeric complexes. It depends on The D1/D2 heterodimer binds P680, chlorophylls that are the primary electron donor of PSII, and subsequent electron acceptors. It shares a non-heme iron and each subunit binds pheophytin, quinone, additional chlorophylls, carotenoids and lipids. D1 provides most of the ligands for the Mn4-Ca-O5 cluster of the oxygen-evolving complex (OEC). There is also a Cl(-1) ion associated with D1 and D2, which is required for oxygen evolution. The PSII complex binds additional chlorophylls, carotenoids and specific lipids. as a cofactor. Post-translationally, tyr-161 forms a radical intermediate that is referred to as redox-active TyrZ, YZ or Y-Z. In terms of processing, C-terminally processed by CTPA; processing is essential to allow assembly of the oxygen-evolving complex and thus photosynthetic growth.

It is found in the plastid. Its subcellular location is the chloroplast thylakoid membrane. It catalyses the reaction 2 a plastoquinone + 4 hnu + 2 H2O = 2 a plastoquinol + O2. In terms of biological role, photosystem II (PSII) is a light-driven water:plastoquinone oxidoreductase that uses light energy to abstract electrons from H(2)O, generating O(2) and a proton gradient subsequently used for ATP formation. It consists of a core antenna complex that captures photons, and an electron transfer chain that converts photonic excitation into a charge separation. The D1/D2 (PsbA/PsbD) reaction center heterodimer binds P680, the primary electron donor of PSII as well as several subsequent electron acceptors. The sequence is that of Photosystem II protein D1 from Vicia faba (Broad bean).